Reading from the N-terminus, the 105-residue chain is Nucleoid-associated protein MXAN_1931 (105 aa).

The protein belongs to the YbaB/EbfC family. As to quaternary structure, homodimer.

Its subcellular location is the cytoplasm. The protein localises to the nucleoid. Binds to DNA and alters its conformation. May be involved in regulation of gene expression, nucleoid organization and DNA protection. This Myxococcus xanthus (strain DK1622) protein is Nucleoid-associated protein MXAN_1931.